A 142-amino-acid chain; its full sequence is Large ribosomal subunit protein uL13 (142 aa).

It belongs to the universal ribosomal protein uL13 family. In terms of assembly, part of the 50S ribosomal subunit.

In terms of biological role, this protein is one of the early assembly proteins of the 50S ribosomal subunit, although it is not seen to bind rRNA by itself. It is important during the early stages of 50S assembly. The protein is Large ribosomal subunit protein uL13 of Bordetella petrii (strain ATCC BAA-461 / DSM 12804 / CCUG 43448).